The chain runs to 507 residues: Histidine ammonia-lyase (507 aa).

Positions 142–144 (ASG) form a cross-link, 5-imidazolinone (Ala-Gly). Ser143 carries the 2,3-didehydroalanine (Ser) modification.

Belongs to the PAL/histidase family. Contains an active site 4-methylidene-imidazol-5-one (MIO), which is formed autocatalytically by cyclization and dehydration of residues Ala-Ser-Gly.

It localises to the cytoplasm. The catalysed reaction is L-histidine = trans-urocanate + NH4(+). It functions in the pathway amino-acid degradation; L-histidine degradation into L-glutamate; N-formimidoyl-L-glutamate from L-histidine: step 1/3. The protein is Histidine ammonia-lyase of Symbiobacterium thermophilum (strain DSM 24528 / JCM 14929 / IAM 14863 / T).